We begin with the raw amino-acid sequence, 69 residues long: uncharacterized protein (69 aa).

This is an uncharacterized protein from Vaccinia virus (strain Western Reserve) (VACV).